We begin with the raw amino-acid sequence, 142 residues long: UPF0275 protein PM0505 (142 aa).

It belongs to the UPF0275 family.

This chain is UPF0275 protein PM0505, found in Pasteurella multocida (strain Pm70).